The chain runs to 142 residues: Phosphoribosyl-AMP cyclohydrolase (142 aa).

Asp-92 is a binding site for Mg(2+). Cys-93 contributes to the Zn(2+) binding site. Positions 94 and 96 each coordinate Mg(2+). Residues Cys-109 and Cys-116 each contribute to the Zn(2+) site.

Belongs to the PRA-CH family. As to quaternary structure, homodimer. It depends on Mg(2+) as a cofactor. Requires Zn(2+) as cofactor.

The protein localises to the cytoplasm. It carries out the reaction 1-(5-phospho-beta-D-ribosyl)-5'-AMP + H2O = 1-(5-phospho-beta-D-ribosyl)-5-[(5-phospho-beta-D-ribosylamino)methylideneamino]imidazole-4-carboxamide. The protein operates within amino-acid biosynthesis; L-histidine biosynthesis; L-histidine from 5-phospho-alpha-D-ribose 1-diphosphate: step 3/9. Catalyzes the hydrolysis of the adenine ring of phosphoribosyl-AMP. In Halorhodospira halophila (strain DSM 244 / SL1) (Ectothiorhodospira halophila (strain DSM 244 / SL1)), this protein is Phosphoribosyl-AMP cyclohydrolase.